The sequence spans 1270 residues: MLAKQTERLSFSSVKNKPAYPDFLDLQIKSFQDFFQLETKSEERGNEGLYNTFLENFPITDTRNQFVLEFLDYFVDPPRYSIQECIERGLTYSVPLKARLKLYCTDPEHEDFETIVQDVYLGTIPYMTPSGTFCINGAERVVVSQLHRSPGVFFGQSFHANGTKLYSARVIPFKGSWIEFATDINSVMYAYIDRKKKLPVTTLFRAIGFERDKDILEIFDLAEEVKVSKTGLKKYLGRKLAARVLNTWYEDFVDEDTGEVVSIERNEIVLDRDTELEKDHIEEILETGSKTILLHKEDNQTGDYAIIHNTLQKDPTNSEKEAVEHIYRQLRNAEPPDEETARGIIDKLFFSDQRYSLGEVGRYRMNKKLGLDVEMDKQVLTKLDIITIVKYLIELINSKAEIDDIDHLSNRRVRTVGEQLSQQFGVGLARMARTIRERMNVRDNEVFTPIDLINAKTLSSVINSFFGTNQLSQFMDQTNPLAEITHKRRLSALGPGGLSRERAGFEVRDVHYTHYGRLCPIETPEGPNIGLISSLSVYAKVNGMGFIETPYRSVTDGKINTSEEPIYLSAEEEEGKKIAQANIPLKDDGTIDTDRVIARMEGDFPVVDPKEIHYTDVAPNQISSISASLIPFLEHDDANRALMGSNMMRQAVPLLRTDSPIVGTGLERQVATDSRVLINAEGEGEVEYVDANKIVIKYDRTEEERMVSFDDDSKSYNLIKFRKTNQGSCINLKPIISVGDRVTKGQVLCQGYATEAGELALGRNMKVAFMPWKGYNFEDAIVISEKVVRDDIFTSIHIDEYSLEVRDTKLGNEELTNDIPNVSEEATKDLDEHGMIRVGAEVKPGDILIGKITPKGESDPTPEEKLLRAIFGDKAGDVKDASLKASPSLSGVVINKKLFARAIKDKRKRAQDKEDVAALEKKYDAKFANLKADLVEKLFTIIGGKTAQGVQNDLGEEVMPKGKKYTLKMLNAVDDYTHLTTGTWTTDDHLNELVADLLHNYKIKENDLQGNLRREKFTVSVGDELPSGILKLAKVYIAKKRKLKVGDKMAGRHGNKGIVARIVRQEDMPFLEDGTPVDIVLNPLGVPSRMNIGQIYETVLGWAGQKNGKKYATPIFDGATIEEINDLTDKAGIPRYGHTYLYDGGTGMRFDQRATVGVIYMLKLGHMIDDKMHARSIGPYSLITQQPLGGKAQFGGQRFGEMEVWALEAYGASATLREILTVKSDDVIGRAKTYEAIVKGEPMPEPGLPESFNVLMHELKGLGLDIKLEE.

This sequence belongs to the RNA polymerase beta chain family. As to quaternary structure, the RNAP catalytic core consists of 2 alpha, 1 beta, 1 beta' and 1 omega subunit. When a sigma factor is associated with the core the holoenzyme is formed, which can initiate transcription.

The catalysed reaction is RNA(n) + a ribonucleoside 5'-triphosphate = RNA(n+1) + diphosphate. Its function is as follows. DNA-dependent RNA polymerase catalyzes the transcription of DNA into RNA using the four ribonucleoside triphosphates as substrates. The protein is DNA-directed RNA polymerase subunit beta of Christiangramia forsetii (strain DSM 17595 / CGMCC 1.15422 / KT0803) (Gramella forsetii).